The following is a 126-amino-acid chain: Holo-[acyl-carrier-protein] synthase (126 aa).

Mg(2+) is bound by residues aspartate 8 and glutamate 59.

The protein belongs to the P-Pant transferase superfamily. AcpS family. It depends on Mg(2+) as a cofactor.

The protein resides in the cytoplasm. It carries out the reaction apo-[ACP] + CoA = holo-[ACP] + adenosine 3',5'-bisphosphate + H(+). In terms of biological role, transfers the 4'-phosphopantetheine moiety from coenzyme A to a Ser of acyl-carrier-protein. This is Holo-[acyl-carrier-protein] synthase from Rickettsia prowazekii (strain Madrid E).